Here is a 128-residue protein sequence, read N- to C-terminus: Large ribosomal subunit protein bL12 (128 aa).

Belongs to the bacterial ribosomal protein bL12 family. As to quaternary structure, homodimer. Part of the ribosomal stalk of the 50S ribosomal subunit. Forms a multimeric L10(L12)X complex, where L10 forms an elongated spine to which 2 to 4 L12 dimers bind in a sequential fashion. Binds GTP-bound translation factors.

Forms part of the ribosomal stalk which helps the ribosome interact with GTP-bound translation factors. Is thus essential for accurate translation. This Corynebacterium kroppenstedtii (strain DSM 44385 / JCM 11950 / CIP 105744 / CCUG 35717) protein is Large ribosomal subunit protein bL12.